We begin with the raw amino-acid sequence, 64 residues long: Purotoxin-2 (64 aa).

The tract at residues 1–44 (AKACTPLLHDCSHDRHSCCRGDMFKYVCDCFYPEGEDKTEVCSC) is knottin domain. 4 cysteine pairs are disulfide-bonded: Cys4–Cys19, Cys11–Cys28, Cys18–Cys44, and Cys30–Cys42. Positions 45–64 (QQPKSHKIAEKIIDKAKTTL) are linear cationic cytotoxin domain. Leu64 carries the leucine amide modification.

It belongs to the neurotoxin 19 (CSTX) family. 05 (U4-Lctx) subfamily. Amidation at Leu-64 is not mandatory for activity on P2RX3. Expressed by the venom gland.

It is found in the secreted. Its function is as follows. Enhances the high-affinity desensitization of human P2RX3 purinoceptors. At 50 nM, the toxin decreases the IC(50) for ambient ATP from 2.67 nM to 0.77 nM in human P2RX3. This is Purotoxin-2 from Alopecosa marikovskyi (Wolf spider).